The chain runs to 209 residues: Pyrrolidone-carboxylate peptidase (209 aa).

Catalysis depends on residues Glu79, Cys142, and His164.

This sequence belongs to the peptidase C15 family. As to quaternary structure, homotetramer.

Its subcellular location is the cytoplasm. The enzyme catalyses Release of an N-terminal pyroglutamyl group from a polypeptide, the second amino acid generally not being Pro.. Its function is as follows. Removes 5-oxoproline from various penultimate amino acid residues except L-proline. The polypeptide is Pyrrolidone-carboxylate peptidase (Saccharolobus islandicus (strain Y.N.15.51 / Yellowstone #2) (Sulfolobus islandicus)).